A 233-amino-acid polypeptide reads, in one-letter code: Peroxisomal membrane protein 11-5 (233 aa).

The Cytoplasmic segment spans residues 1–92; the sequence is MSSLESARAD…PLILLGKSKN (92 aa). Residues 93–113 traverse the membrane as a helical segment; sequence ALLSTFLFLDQIVWAGRTGIY. Over 114 to 206 the chain is Lumenal; sequence KNKERAEFLS…LLQLAPKKVT (93 aa). Residues 207–226 form a helical membrane-spanning segment; the sequence is PRVTGAFGFASSLIACYQLL.

Belongs to the peroxin-11 family. In terms of tissue distribution, expressed in seedlings, roots, shoots, leaf sheaths, flag leaf, panicles, spikelets, and endosperm.

Its subcellular location is the peroxisome membrane. Involved in peroxisomal proliferation. This chain is Peroxisomal membrane protein 11-5 (PEX11-5), found in Oryza sativa subsp. japonica (Rice).